Consider the following 241-residue polypeptide: UPF0280 protein MK0206 (241 aa).

The protein belongs to the UPF0280 family.

In Methanopyrus kandleri (strain AV19 / DSM 6324 / JCM 9639 / NBRC 100938), this protein is UPF0280 protein MK0206.